The following is a 621-amino-acid chain: 5-aminolevulinate synthase, mitochondrial (621 aa).

The segment at 76–95 is disordered; sequence DAKGSLAGRPVHHKAATEST. Substrate-binding residues include arginine 122 and serine 234. The pyridoxal 5'-phosphate site is built by serine 286, histidine 314, and threonine 359. Lysine 362 is an active-site residue. Residue lysine 362 is modified to N6-(pyridoxal phosphate)lysine. Residues threonine 391 and threonine 392 each contribute to the pyridoxal 5'-phosphate site. Position 477 (threonine 477) interacts with substrate.

It belongs to the class-II pyridoxal-phosphate-dependent aminotransferase family. As to quaternary structure, homodimer. The cofactor is pyridoxal 5'-phosphate.

It is found in the mitochondrion matrix. It catalyses the reaction succinyl-CoA + glycine + H(+) = 5-aminolevulinate + CO2 + CoA. Its pathway is porphyrin-containing compound metabolism; protoporphyrin-IX biosynthesis; 5-aminolevulinate from glycine: step 1/1. Catalyzes the synthesis of 5-aminolevulinate (ALA) from succinyl-CoA and glycine, the first and rate-limiting step in heme biosynthesis. This Agaricus bisporus (White button mushroom) protein is 5-aminolevulinate synthase, mitochondrial (hem1).